We begin with the raw amino-acid sequence, 266 residues long: Dioicin-2 (266 aa).

2 disulfides stabilise this stretch: C32-C263 and C85-C102. The active site involves E176.

It is found in the secreted. The protein resides in the extracellular space. Its subcellular location is the golgi apparatus. It localises to the vacuole. It carries out the reaction Endohydrolysis of the N-glycosidic bond at one specific adenosine on the 28S rRNA.. Its function is as follows. Nicks pBR322 dsDNA. Has adenine polynucleotide glycosidase activity on herring sperm ssDNA. In Phytolacca dioica (Bella sombra tree), this protein is Dioicin-2.